Reading from the N-terminus, the 326-residue chain is Polyprenal reductase (326 aa).

Transmembrane regions (helical) follow at residues 26–46, 84–104, 167–187, 212–232, and 256–276; these read MMFG…TFVE, HFYT…VSTV, INLS…IALL, ILYL…NMIL, and LFNL…FCIA.

Belongs to the steroid 5-alpha reductase family. Polyprenal reductase subfamily.

Its subcellular location is the endoplasmic reticulum membrane. The enzyme catalyses a di-trans,poly-cis-dolichal + NADP(+) = a di-trans,poly-cis-polyprenal + NADPH + H(+). It functions in the pathway protein modification; protein glycosylation. Functionally, plays a key role in early steps of protein N-linked glycosylation by being involved in the conversion of polyprenol into dolichol. Acts as a polyprenal reductase that mediates the reduction of polyprenal into dolichal in a NADP-dependent mechanism. Dolichols are required for the synthesis of dolichol-linked monosaccharides and the oligosaccharide precursor used for N-glycosylation. In Drosophila melanogaster (Fruit fly), this protein is Polyprenal reductase.